A 174-amino-acid chain; its full sequence is Adenine phosphoribosyltransferase (174 aa).

Belongs to the purine/pyrimidine phosphoribosyltransferase family. Homodimer.

It localises to the cytoplasm. It carries out the reaction AMP + diphosphate = 5-phospho-alpha-D-ribose 1-diphosphate + adenine. It participates in purine metabolism; AMP biosynthesis via salvage pathway; AMP from adenine: step 1/1. In terms of biological role, catalyzes a salvage reaction resulting in the formation of AMP, that is energically less costly than de novo synthesis. In Mycolicibacterium vanbaalenii (strain DSM 7251 / JCM 13017 / BCRC 16820 / KCTC 9966 / NRRL B-24157 / PYR-1) (Mycobacterium vanbaalenii), this protein is Adenine phosphoribosyltransferase.